The following is a 378-amino-acid chain: Erythronate-4-phosphate dehydrogenase (378 aa).

Ser45 and Thr66 together coordinate substrate. NAD(+)-binding residues include Asp146 and Thr175. Arg208 is an active-site residue. Asp232 is a binding site for NAD(+). Residue Glu237 is part of the active site. The active-site Proton donor is His254. Residue Gly257 participates in NAD(+) binding. Tyr258 contributes to the substrate binding site.

This sequence belongs to the D-isomer specific 2-hydroxyacid dehydrogenase family. PdxB subfamily. Homodimer.

It is found in the cytoplasm. The enzyme catalyses 4-phospho-D-erythronate + NAD(+) = (R)-3-hydroxy-2-oxo-4-phosphooxybutanoate + NADH + H(+). The protein operates within cofactor biosynthesis; pyridoxine 5'-phosphate biosynthesis; pyridoxine 5'-phosphate from D-erythrose 4-phosphate: step 2/5. Its function is as follows. Catalyzes the oxidation of erythronate-4-phosphate to 3-hydroxy-2-oxo-4-phosphonooxybutanoate. This is Erythronate-4-phosphate dehydrogenase from Shigella boydii serotype 4 (strain Sb227).